The primary structure comprises 555 residues: Lysine--tRNA ligase (555 aa).

The 'HIGH' region signature appears at 37 to 45 (TSGRLHVGN). A 'KMSKS' region motif is present at residues 301 to 305 (AMSSS).

The protein belongs to the class-I aminoacyl-tRNA synthetase family.

The protein resides in the cytoplasm. The enzyme catalyses tRNA(Lys) + L-lysine + ATP = L-lysyl-tRNA(Lys) + AMP + diphosphate. The chain is Lysine--tRNA ligase from Methanopyrus kandleri (strain AV19 / DSM 6324 / JCM 9639 / NBRC 100938).